A 489-amino-acid polypeptide reads, in one-letter code: Ribulose-1,5 bisphosphate carboxylase/oxygenase large subunit N-methyltransferase, chloroplastic (489 aa).

The transit peptide at 1-37 directs the protein to the chloroplast; that stretch reads MATIFSGGSVSPFLFHTNKGTSFTPKAPILHLKRSFS. Residues 64–288 enclose the SET domain; sequence EGVITAKTPV…AGEQVYIQYD (225 aa). S-adenosyl-L-methionine is bound by residues 80–82 and Arg-222; that span reads EGL. Substrate is bound by residues Arg-222, Arg-226, and Asp-239. 242–243 provides a ligand contact to S-adenosyl-L-methionine; the sequence is NH. Substrate-binding residues include Tyr-254, Tyr-287, and Tyr-300.

It belongs to the class V-like SAM-binding methyltransferase superfamily. Plant protein-lysine LSMT methyltransferase family. Homotrimer. Highly expressed in leaf.

Its subcellular location is the plastid. The protein localises to the chloroplast. The catalysed reaction is L-lysyl-[ribulose-1,5-bisphosphate carboxylase] + 3 S-adenosyl-L-methionine = N(6),N(6),N(6)-trimethyl-L-lysyl-[ribulose-1,5-bisphosphate carboxylase] + 3 S-adenosyl-L-homocysteine + 3 H(+). It catalyses the reaction [fructose-bisphosphate aldolase]-L-lysine + 3 S-adenosyl-L-methionine = [fructose-bisphosphate aldolase]-N(6),N(6),N(6)-trimethyl-L-lysine + 3 S-adenosyl-L-homocysteine + 3 H(+). Functionally, methylates 'Lys-14' of the large subunit of RuBisCO. Can also use with lower efficiency chloroplastic fructose-bisphosphate aldolases and gamma-tocopherol methyltransferase as substrates, but not a cytosolic aldolase. This Pisum sativum (Garden pea) protein is Ribulose-1,5 bisphosphate carboxylase/oxygenase large subunit N-methyltransferase, chloroplastic (RBCMT).